We begin with the raw amino-acid sequence, 51 residues long: UPF0181 protein VV2_0310 (51 aa).

Belongs to the UPF0181 family.

This is UPF0181 protein VV2_0310 from Vibrio vulnificus (strain CMCP6).